Reading from the N-terminus, the 83-residue chain is Large ribosomal subunit protein bL31B (83 aa).

This sequence belongs to the bacterial ribosomal protein bL31 family. Type B subfamily. Part of the 50S ribosomal subunit.

Functionally, binds the 23S rRNA. In Hydrogenovibrio crunogenus (strain DSM 25203 / XCL-2) (Thiomicrospira crunogena), this protein is Large ribosomal subunit protein bL31B.